The chain runs to 365 residues: Caffeic acid 3-O-methyltransferase 1 (365 aa).

130–136 (MNQDKVL) provides a ligand contact to substrate. Residues 162–180 (AFEYHGTDPRFNKVFNKGM) form a substrate binding region. S-adenosyl-L-methionine-binding residues include Gly208, Asp231, Asp251, Met252, and Lys265. His269 (proton acceptor) is an active-site residue.

It belongs to the class I-like SAM-binding methyltransferase superfamily. Cation-independent O-methyltransferase family. COMT subfamily. As to quaternary structure, homodimer.

It carries out the reaction (E)-caffeate + S-adenosyl-L-methionine = (E)-ferulate + S-adenosyl-L-homocysteine + H(+). It participates in aromatic compound metabolism; phenylpropanoid biosynthesis. In terms of biological role, catalyzes the conversion of caffeic acid to ferulic acid and of 5-hydroxyferulic acid to sinapic acid. The resulting products may subsequently be converted to the corresponding alcohols that are incorporated into lignins. The polypeptide is Caffeic acid 3-O-methyltransferase 1 (HOMT1) (Populus kitakamiensis (Aspen)).